We begin with the raw amino-acid sequence, 428 residues long: Pregnancy-specific beta-1-glycoprotein 3 (428 aa).

The first 34 residues, 1–34 (MGPLSAPPCTQRITWKGLLLTALLLNFWNLPTTA), serve as a signal peptide directing secretion. Residues 35-144 (QVTIEAEPTK…TGHFTFTLYL (110 aa)) enclose the Ig-like V-type domain. Asparagine 104 and asparagine 111 each carry an N-linked (GlcNAc...) asparagine glycan. The short motif at 127–129 (RGD) is the Cell attachment site element. Ig-like C2-type domains follow at residues 147 to 234 (PKPS…VTLN), 240 to 327 (PKPY…VTLN), and 335 to 410 (PRIY…KSMT). Cystine bridges form between cysteine 169-cysteine 217, cysteine 262-cysteine 310, and cysteine 354-cysteine 394. Asparagine 268 and asparagine 303 each carry an N-linked (GlcNAc...) asparagine glycan.

The protein belongs to the immunoglobulin superfamily. CEA family.

It is found in the secreted. In Homo sapiens (Human), this protein is Pregnancy-specific beta-1-glycoprotein 3 (PSG3).